Here is a 542-residue protein sequence, read N- to C-terminus: Chitinase 2 (542 aa).

A signal peptide spans 1–22; it reads MLTRTFLGMAISAFLASTGVQA. In terms of domain architecture, GH18 spans 29–314; that stretch reads PNVMYYWGQN…SQLYSLVHSG (286 aa). Glu166 (proton donor) is an active-site residue. The disordered stretch occupies residues 312-356; that stretch reads HSGGSTPPPPSSSSATKTTTKTTATSTKTTTTTAPTATSTPGSCP. Residues 323 to 354 show a composition bias toward low complexity; it reads SSSATKTTTKTTATSTKTTTTTAPTATSTPGS. The segment at 355 to 406 is chitin-binding, high affinity; it reads CPVANQPCSTQNQYACTADGKYAVCDHGKWVASSCPSNTVCIPTTDGASIYC. Residues 447 to 542 constitute a propeptide that is removed on maturation; the sequence is AQLAVTSTDK…APSTSAWNFK (96 aa).

It belongs to the glycosyl hydrolase 18 family. Chitinase class III subfamily. As to quaternary structure, monomer. Post-translationally, O-glycosylated.

It is found in the secreted. The catalysed reaction is Random endo-hydrolysis of N-acetyl-beta-D-glucosaminide (1-&gt;4)-beta-linkages in chitin and chitodextrins.. Its function is as follows. Probably involved in the apical growth and branching of fungal hyphae. In Rhizopus oligosporus (Rhizopus microsporus var. oligosporus), this protein is Chitinase 2 (CHI2).